We begin with the raw amino-acid sequence, 228 residues long: Indole-3-glycerol phosphate synthase (228 aa).

Belongs to the TrpC family.

The catalysed reaction is 1-(2-carboxyphenylamino)-1-deoxy-D-ribulose 5-phosphate + H(+) = (1S,2R)-1-C-(indol-3-yl)glycerol 3-phosphate + CO2 + H2O. It functions in the pathway amino-acid biosynthesis; L-tryptophan biosynthesis; L-tryptophan from chorismate: step 4/5. The sequence is that of Indole-3-glycerol phosphate synthase from Pyrococcus furiosus (strain ATCC 43587 / DSM 3638 / JCM 8422 / Vc1).